We begin with the raw amino-acid sequence, 211 residues long: Pyridoxine/pyridoxamine 5'-phosphate oxidase (211 aa).

Substrate contacts are provided by residues 7-10 (RTDY) and K65. FMN-binding positions include 60 to 65 (RILLIK), 75 to 76 (FT), R81, and K82. Positions 122, 126, and 130 each coordinate substrate. Residues 139–140 (QS) and W183 contribute to the FMN site. A substrate-binding site is contributed by 189 to 191 (RLH). R193 serves as a coordination point for FMN.

This sequence belongs to the pyridoxamine 5'-phosphate oxidase family. In terms of assembly, homodimer. The cofactor is FMN.

It carries out the reaction pyridoxamine 5'-phosphate + O2 + H2O = pyridoxal 5'-phosphate + H2O2 + NH4(+). The enzyme catalyses pyridoxine 5'-phosphate + O2 = pyridoxal 5'-phosphate + H2O2. It functions in the pathway cofactor metabolism; pyridoxal 5'-phosphate salvage; pyridoxal 5'-phosphate from pyridoxamine 5'-phosphate: step 1/1. Its pathway is cofactor metabolism; pyridoxal 5'-phosphate salvage; pyridoxal 5'-phosphate from pyridoxine 5'-phosphate: step 1/1. Functionally, catalyzes the oxidation of either pyridoxine 5'-phosphate (PNP) or pyridoxamine 5'-phosphate (PMP) into pyridoxal 5'-phosphate (PLP). The polypeptide is Pyridoxine/pyridoxamine 5'-phosphate oxidase (Janthinobacterium sp. (strain Marseille) (Minibacterium massiliensis)).